A 180-amino-acid polypeptide reads, in one-letter code: Dephospho-CoA kinase (180 aa).

Positions 2–180 (VIGVTGKIGT…VMKLVWEKRE (179 aa)) constitute a DPCK domain. 10–15 (GTGKST) lines the ATP pocket.

The protein belongs to the CoaE family.

It is found in the cytoplasm. The enzyme catalyses 3'-dephospho-CoA + ATP = ADP + CoA + H(+). It functions in the pathway cofactor biosynthesis; coenzyme A biosynthesis; CoA from (R)-pantothenate: step 5/5. Functionally, catalyzes the phosphorylation of the 3'-hydroxyl group of dephosphocoenzyme A to form coenzyme A. The protein is Dephospho-CoA kinase of Thermotoga maritima (strain ATCC 43589 / DSM 3109 / JCM 10099 / NBRC 100826 / MSB8).